The sequence spans 233 residues: MKLFDYAPLSLAWREFLQSEFKKPYFLEIEKRYLEALKSPKTIFPKSSNLFYALNLTPPSAVKIILLGQDPYHSTYLENQQELPVAMGLSFSVEKNAPIPPSLKNIFKELHANLGVSVPCCGDLSAWAKRGMLLLNAILSVEKNKAASHKRIGWEAFSDQILMRLFEANAPLIVVLLGKVAQKKIALIPKNKHIIITAPHPSPLSRGFLGSGVFTSIQNAYREVYHKDFDFSL.

Aspartate 70 (proton acceptor) is an active-site residue.

This sequence belongs to the uracil-DNA glycosylase (UDG) superfamily. UNG family.

The protein resides in the cytoplasm. The enzyme catalyses Hydrolyzes single-stranded DNA or mismatched double-stranded DNA and polynucleotides, releasing free uracil.. In terms of biological role, excises uracil residues from the DNA which can arise as a result of misincorporation of dUMP residues by DNA polymerase or due to deamination of cytosine. The polypeptide is Uracil-DNA glycosylase (Helicobacter pylori (strain HPAG1)).